Here is a 59-residue protein sequence, read N- to C-terminus: Cecropin-B2 (59 aa).

The signal sequence occupies residues 1-23 (MNFNKLFLIVILAALLLLGQTEA). Leu-57 carries the leucine amide modification.

This sequence belongs to the cecropin family.

The protein localises to the secreted. Functionally, cecropins have lytic and antibacterial activity against several Gram-positive and Gram-negative bacteria. In Culex pipiens pipiens (Northern house mosquito), this protein is Cecropin-B2 (CECB2).